A 607-amino-acid chain; its full sequence is Probable CoA ligase CCL8 (607 aa).

ATP is bound by residues Thr-236 to Lys-244, Glu-391 to Thr-396, Asp-474, Ile-486 to Arg-489, and Lys-591. The segment at Ser-305–Glu-391 is SBD1. An SBD2 region spans residues Arg-392 to Tyr-453.

The protein belongs to the ATP-dependent AMP-binding enzyme family. As to expression, mostly expressed at low levels in glandular trichomes (lupulin glands) after flowering, and, to a lower extent, in stems, leaves, flowers and cones.

Its subcellular location is the cytoplasm. The protein resides in the cytosol. The sequence is that of Probable CoA ligase CCL8 from Humulus lupulus (European hop).